Reading from the N-terminus, the 792-residue chain is Cadherin-11 (792 aa).

The first 22 residues, 1–22, serve as a signal peptide directing secretion; that stretch reads MKEDNCLHAALICLGMLYYSHA. Positions 23 to 53 are excised as a propeptide; the sequence is ITTEKLNHVRPSLHGHHEKGKEGQVLHRSKR. Cadherin domains lie at 54 to 159, 160 to 268, 269 to 383, 384 to 486, and 487 to 608; these read GWVW…PPEF, LHEN…PPKF, PQSV…PPVF, LKPS…DNAP, and KFAA…YILN. At 54-613 the chain is on the extracellular side; sequence GWVWNQFFVI…AYILNAGLST (560 aa). Residues Asn455, Asn536, and Asn594 are each glycosylated (N-linked (GlcNAc...) asparagine). Residues 614–634 form a helical membrane-spanning segment; sequence GALIAILACIVILLVIVVLFV. Residues 635-792 are Cytoplasmic-facing; it reads TLKRQKKEPL…GSKDTFDDDS (158 aa).

The protein resides in the cell membrane. Functionally, cadherins are calcium-dependent cell adhesion proteins. They preferentially interact with themselves in a homophilic manner in connecting cells; cadherins may thus contribute to the sorting of heterogeneous cell types. Required for proper focal adhesion assembly. Involved in the regulation of cell migration. In Gallus gallus (Chicken), this protein is Cadherin-11 (CDH11).